A 306-amino-acid chain; its full sequence is D-alanine--D-alanine ligase (306 aa).

Catalysis depends on residues Glu-15 and Ser-150. One can recognise an ATP-grasp domain in the interval 101-303 (KLLWKSLSLR…FDELILKILK (203 aa)). 134-189 (ILKLKFPVVIKPNNAGSSIGITIVNHPDLLIDSINLAFNYSNNIIIEKFLKGTEYT) lines the ATP pocket. Mg(2+) is bound by residues Asp-257, Glu-270, and Asn-272. Ser-281 is an active-site residue.

This sequence belongs to the D-alanine--D-alanine ligase family. The cofactor is Mg(2+). Requires Mn(2+) as cofactor.

It localises to the cytoplasm. It catalyses the reaction 2 D-alanine + ATP = D-alanyl-D-alanine + ADP + phosphate + H(+). It functions in the pathway cell wall biogenesis; peptidoglycan biosynthesis. In terms of biological role, cell wall formation. This is D-alanine--D-alanine ligase from Buchnera aphidicola subsp. Schizaphis graminum (strain Sg).